A 78-amino-acid chain; its full sequence is Small ribosomal subunit protein bS18 (78 aa).

This sequence belongs to the bacterial ribosomal protein bS18 family. In terms of assembly, part of the 30S ribosomal subunit. Forms a tight heterodimer with protein bS6.

Functionally, binds as a heterodimer with protein bS6 to the central domain of the 16S rRNA, where it helps stabilize the platform of the 30S subunit. The protein is Small ribosomal subunit protein bS18 of Lacticaseibacillus casei (strain BL23) (Lactobacillus casei).